Reading from the N-terminus, the 108-residue chain is Tubulin-specific chaperone A (108 aa).

Ala2 carries the N-acetylalanine modification.

It belongs to the TBCA family. As to quaternary structure, supercomplex made of cofactors A to E. Cofactors A and D function by capturing and stabilizing tubulin in a quasi-native conformation. Cofactor E binds to the cofactor D-tubulin complex; interaction with cofactor C then causes the release of tubulin polypeptides that are committed to the native state.

It is found in the cytoplasm. It localises to the cytoskeleton. Functionally, tubulin-folding protein; involved in the early step of the tubulin folding pathway. The sequence is that of Tubulin-specific chaperone A (TBCA) from Homo sapiens (Human).